Here is a 212-residue protein sequence, read N- to C-terminus: ER lumen protein-retaining receptor 2 (212 aa).

Over 1-4 the chain is Lumenal; it reads MNIF. Residues 5 to 24 traverse the membrane as a helical segment; it reads RLTGDLSHLAAIVILLLKIW. Over 25–32 the chain is Cytoplasmic; that stretch reads KTRSCAGI. The helical transmembrane segment at 33 to 52 threads the bilayer; it reads SGKSQLLFALVFTTRYLDLF. Positions 47–48 are interaction with the K-D-E-L motif on target proteins; that stretch reads RY. Residues 53–58 are Lumenal-facing; the sequence is TSFISL. The helical transmembrane segment at 59–79 threads the bilayer; sequence YNTSMKLIYIACSYATVYLIY. Residues 80 to 92 lie on the Cytoplasmic side of the membrane; that stretch reads MKFKATYDGNHDT. A helical membrane pass occupies residues 93–110; sequence FRVEFLVVPVGGLSFLVN. The Lumenal segment spans residues 111 to 116; it reads HDFSPL. A helical membrane pass occupies residues 117–135; sequence EILWTFSIYLESVAILPQL. Over 136–149 the chain is Cytoplasmic; sequence FMISKTGEAETITT. The helical transmembrane segment at 150 to 168 threads the bilayer; it reads HYLFFLGLYRALYLVNWIW. An interaction with the K-D-E-L motif on target proteins region spans residues 159–169; the sequence is RALYLVNWIWR. The Lumenal portion of the chain corresponds to 169–178; sequence RFYFEGFFDL. Residues 179 to 199 form a helical membrane-spanning segment; sequence IAVVAGVVQTILYCDFFYLYI. At 200–212 the chain is on the cytoplasmic side; sequence TKVLKGKKLSLPA. The important for recycling of cargo proteins with the sequence motif K-D-E-L from the Golgi to the endoplasmic reticulum stretch occupies residues 204–207; it reads KGKK.

Belongs to the ERD2 family.

It localises to the endoplasmic reticulum membrane. The protein localises to the golgi apparatus membrane. It is found in the cytoplasmic vesicle. Its subcellular location is the COPI-coated vesicle membrane. Membrane receptor that binds the K-D-E-L sequence motif in the C-terminal part of endoplasmic reticulum resident proteins and maintains their localization in that compartment by participating to their vesicle-mediated recycling back from the Golgi. Binding is pH dependent, and is optimal at pH 5-5.4. This Mus musculus (Mouse) protein is ER lumen protein-retaining receptor 2 (Kdelr2).